Consider the following 218-residue polypeptide: Thiopurine S-methyltransferase (218 aa).

Positions 10, 45, 66, and 123 each coordinate S-adenosyl-L-methionine.

This sequence belongs to the class I-like SAM-binding methyltransferase superfamily. TPMT family.

The protein resides in the cytoplasm. The enzyme catalyses S-adenosyl-L-methionine + a thiopurine = S-adenosyl-L-homocysteine + a thiopurine S-methylether.. The polypeptide is Thiopurine S-methyltransferase (Pseudomonas aeruginosa (strain ATCC 15692 / DSM 22644 / CIP 104116 / JCM 14847 / LMG 12228 / 1C / PRS 101 / PAO1)).